A 244-amino-acid polypeptide reads, in one-letter code: MDKTTHFGYKTVAESEKAGKVAEVFHSVASKYDVMNDLMSGGLHRVWKHFTLTTSGVRAGDKVLDIAGGTGDLSRGWAKRVGKTGEVWLTDINSSMLTVGRDRLLDEGVILPVSLADAEKLPFPDNYFDAVSVAFGLRNMTHKDAALKEMCRVLKPGGKLFVLEFSKVWKPLSPFYDFYSFKALPIMGKLVANDADSYQYLAESIRMHPDQETLKQMMLDAGFGKVDYHNLTGGVVALHKGVKF.

S-adenosyl-L-methionine-binding positions include T70, D91, and 117–118 (DA).

Belongs to the class I-like SAM-binding methyltransferase superfamily. MenG/UbiE family.

It catalyses the reaction a 2-demethylmenaquinol + S-adenosyl-L-methionine = a menaquinol + S-adenosyl-L-homocysteine + H(+). It carries out the reaction a 2-methoxy-6-(all-trans-polyprenyl)benzene-1,4-diol + S-adenosyl-L-methionine = a 5-methoxy-2-methyl-3-(all-trans-polyprenyl)benzene-1,4-diol + S-adenosyl-L-homocysteine + H(+). It participates in quinol/quinone metabolism; menaquinone biosynthesis; menaquinol from 1,4-dihydroxy-2-naphthoate: step 2/2. It functions in the pathway cofactor biosynthesis; ubiquinone biosynthesis. Functionally, methyltransferase required for the conversion of demethylmenaquinol (DMKH2) to menaquinol (MKH2) and the conversion of 2-polyprenyl-6-methoxy-1,4-benzoquinol (DDMQH2) to 2-polyprenyl-3-methyl-6-methoxy-1,4-benzoquinol (DMQH2). This is Ubiquinone/menaquinone biosynthesis C-methyltransferase UbiE from Chromobacterium violaceum (strain ATCC 12472 / DSM 30191 / JCM 1249 / CCUG 213 / NBRC 12614 / NCIMB 9131 / NCTC 9757 / MK).